A 120-amino-acid polypeptide reads, in one-letter code: Prefoldin subunit beta (120 aa).

The protein belongs to the prefoldin subunit beta family. As to quaternary structure, heterohexamer of two alpha and four beta subunits.

The protein localises to the cytoplasm. Molecular chaperone capable of stabilizing a range of proteins. Seems to fulfill an ATP-independent, HSP70-like function in archaeal de novo protein folding. This is Prefoldin subunit beta (pfdB) from Methanopyrus kandleri (strain AV19 / DSM 6324 / JCM 9639 / NBRC 100938).